The sequence spans 404 residues: uncharacterized protein (404 aa).

An N-terminal signal peptide occupies residues 1–21 (MRKLGLALSIMGLLLVSIVAG). N-acetylcysteine is present on cysteine 22. Cysteine 22 carries S-archaeol cysteine lipidation.

The protein belongs to the BMP lipoprotein family.

It is found in the cell membrane. This is an uncharacterized protein from Pyrococcus abyssi (strain GE5 / Orsay).